Reading from the N-terminus, the 898-residue chain is Alanine--tRNA ligase (898 aa).

Residues H589, H593, C693, and H697 each coordinate Zn(2+).

The protein belongs to the class-II aminoacyl-tRNA synthetase family. Zn(2+) is required as a cofactor.

It is found in the cytoplasm. The catalysed reaction is tRNA(Ala) + L-alanine + ATP = L-alanyl-tRNA(Ala) + AMP + diphosphate. Its function is as follows. Catalyzes the attachment of alanine to tRNA(Ala) in a two-step reaction: alanine is first activated by ATP to form Ala-AMP and then transferred to the acceptor end of tRNA(Ala). Also edits incorrectly charged Ser-tRNA(Ala) and Gly-tRNA(Ala) via its editing domain. This chain is Alanine--tRNA ligase, found in Methanothermobacter thermautotrophicus (strain ATCC 29096 / DSM 1053 / JCM 10044 / NBRC 100330 / Delta H) (Methanobacterium thermoautotrophicum).